The following is a 182-amino-acid chain: Cytidylate kinase (182 aa).

7 to 15 (GLPGSGTTS) is a binding site for ATP.

This sequence belongs to the cytidylate kinase family. Type 2 subfamily.

It localises to the cytoplasm. It carries out the reaction CMP + ATP = CDP + ADP. It catalyses the reaction dCMP + ATP = dCDP + ADP. The sequence is that of Cytidylate kinase from Methanoregula boonei (strain DSM 21154 / JCM 14090 / 6A8).